The chain runs to 411 residues: uncharacterized protein (411 aa).

Positions 1-21 (MHSRILLLLLMFAFNVGLINC) are cleaved as a signal peptide. The region spanning 28–67 (PQSNCKIRCENGGMCVFDLERPDFHSCICLLGVYTGDRCQ) is the EGF-like domain. Disulfide bonds link Cys32/Cys42, Cys36/Cys54, and Cys56/Cys66. The segment covering 78–97 (TATSDETSHPMNIQHQQSQA) has biased composition (polar residues). 2 disordered regions span residues 78–312 (TATS…EPIR) and 337–375 (HPIEEDEYWDETSKKTDEDSWTAENEGTKKTEEADEYGM). The segment covering 100–230 (DDARRRDDER…VEKELNDKRT (131 aa)) has biased composition (basic and acidic residues). The span at 237–266 (FEYEGGDEEYPQVAEKEDEYDEGYETDNTE) shows a compositional bias: acidic residues. The span at 267-276 (DVTITTTKTT) shows a compositional bias: low complexity.

This is an uncharacterized protein from Caenorhabditis elegans.